A 397-amino-acid chain; its full sequence is Mediator of RNA polymerase II transcription subunit 3 (397 aa).

Position 1 is an N-acetylmethionine (Met1). A compositionally biased stretch (low complexity) spans 147-165 (ASTPTTTATPHANPITHAH). Disordered stretches follow at residues 147-227 (ASTP…AQAQ), 288-327 (SMGA…QSQL), and 346-370 (FQQQ…MGMN). Composition is skewed to polar residues over residues 166 to 178 (SLSN…TMQH) and 189 to 202 (SGST…HNST). Residues 211–223 (KKPRKPRQTKKAK) show a composition bias toward basic residues. The span at 290–303 (GAQNQGGQVSMSQF) shows a compositional bias: polar residues. The span at 309-322 (GSNPNTNTNSNNTP) shows a compositional bias: low complexity.

Belongs to the mediator complex subunit 3 family. In terms of assembly, component of the Mediator complex, which is composed of at least 21 subunits that form three structurally distinct submodules. The Mediator head module contains MED6, MED8, MED11, SRB4/MED17, SRB5/MED18, ROX3/MED19, SRB2/MED20 and SRB6/MED22, the middle module contains MED1, MED4, NUT1/MED5, MED7, CSE2/MED9, NUT2/MED10, SRB7/MED21 and SOH1/MED31, and the tail module contains MED2, PGD1/MED3, RGR1/MED14, GAL11/MED15 and SIN4/MED16. The head and the middle modules interact directly with RNA polymerase II, whereas the elongated tail module interacts with gene-specific regulatory proteins. PGD1/MED3 interacts directly with the CYC8-TUP1 corepressor proteins.

It is found in the nucleus. Component of the Mediator complex, a coactivator involved in the regulated transcription of nearly all RNA polymerase II-dependent genes. Mediator functions as a bridge to convey information from gene-specific regulatory proteins to the basal RNA polymerase II transcription machinery. The Mediator complex, having a compact conformation in its free form, is recruited to promoters by direct interactions with regulatory proteins and serves for the assembly of a functional preinitiation complex with RNA polymerase II and the general transcription factors. The Mediator complex unfolds to an extended conformation and partially surrounds RNA polymerase II, specifically interacting with the unphosphorylated form of the C-terminal domain (CTD) of RNA polymerase II. The Mediator complex dissociates from the RNA polymerase II holoenzyme and stays at the promoter when transcriptional elongation begins. PGD1/MED3 is also involved in direct repeat recombination. The polypeptide is Mediator of RNA polymerase II transcription subunit 3 (PGD1) (Saccharomyces cerevisiae (strain ATCC 204508 / S288c) (Baker's yeast)).